Reading from the N-terminus, the 257-residue chain is DNA repair protein RecO (257 aa).

The protein belongs to the RecO family.

Its function is as follows. Involved in DNA repair and RecF pathway recombination. The protein is DNA repair protein RecO of Synechococcus sp. (strain CC9605).